A 103-amino-acid chain; its full sequence is Co-chaperonin GroES (103 aa).

The protein belongs to the GroES chaperonin family. As to quaternary structure, heptamer of 7 subunits arranged in a ring. Interacts with the chaperonin GroEL.

The protein resides in the cytoplasm. In terms of biological role, together with the chaperonin GroEL, plays an essential role in assisting protein folding. The GroEL-GroES system forms a nano-cage that allows encapsulation of the non-native substrate proteins and provides a physical environment optimized to promote and accelerate protein folding. GroES binds to the apical surface of the GroEL ring, thereby capping the opening of the GroEL channel. This is Co-chaperonin GroES from Prochlorococcus marinus (strain MIT 9313).